The chain runs to 532 residues: Hepatocyte nuclear factor 1-beta-B (532 aa).

The dimerization stretch occupies residues 1–35 (MFTDMVSKLTSLQQELLSALLDSGVTKDVLVQALE). The HNF-p1 domain maps to 5–36 (MVSKLTSLQQELLSALLDSGVTKDVLVQALED). The tract at residues 74–95 (TGAQGKGGKLSGDEGSEDGDDF) is disordered. The POU-specific atypical domain occupies 102–197 (RELQSLNTEE…IDRQFDRVQG (96 aa)). Gly residues predominate over residues 222–231 (SSGAAGGSGA). 2 disordered regions span residues 222 to 245 (SSGA…KRMR) and 500 to 532 (EAGQ…LQAW). Residues 244–324 (MRRNRFKWGP…NRRKEEAFRQ (81 aa)) constitute a DNA-binding region (homeobox; HNF1-type). Residues 505–532 (SHPSRYSTMDSSTITHLGSSKQCPLQAW) are compositionally biased toward polar residues.

Belongs to the HNF1 homeobox family. In terms of assembly, binds DNA as a dimer. Can form homodimer or heterodimer with HNF1-alpha. First expressed at stage 10 in the intermediate mesoderm. Expressed in rhombomere r5 by 14 hpf with expression diminishing by 18 hpf.

It is found in the nucleus. Its function is as follows. Transcription factor that binds to the inverted palindrome 5'-GTTAATNATTAAC-3'. Acts downstream of hnf1ba but is not required for induction of rhombomere r5/r6 gene expression in the hindbrain. The polypeptide is Hepatocyte nuclear factor 1-beta-B (Danio rerio (Zebrafish)).